A 157-amino-acid chain; its full sequence is Crossover junction endodeoxyribonuclease RuvC (157 aa).

Residues D7, E67, and D139 contribute to the active site. Mg(2+)-binding residues include D7, E67, and D139.

Belongs to the RuvC family. As to quaternary structure, homodimer which binds Holliday junction (HJ) DNA. The HJ becomes 2-fold symmetrical on binding to RuvC with unstacked arms; it has a different conformation from HJ DNA in complex with RuvA. In the full resolvosome a probable DNA-RuvA(4)-RuvB(12)-RuvC(2) complex forms which resolves the HJ. Requires Mg(2+) as cofactor.

The protein localises to the cytoplasm. The catalysed reaction is Endonucleolytic cleavage at a junction such as a reciprocal single-stranded crossover between two homologous DNA duplexes (Holliday junction).. Its function is as follows. The RuvA-RuvB-RuvC complex processes Holliday junction (HJ) DNA during genetic recombination and DNA repair. Endonuclease that resolves HJ intermediates. Cleaves cruciform DNA by making single-stranded nicks across the HJ at symmetrical positions within the homologous arms, yielding a 5'-phosphate and a 3'-hydroxyl group; requires a central core of homology in the junction. The consensus cleavage sequence is 5'-(A/T)TT(C/G)-3'. Cleavage occurs on the 3'-side of the TT dinucleotide at the point of strand exchange. HJ branch migration catalyzed by RuvA-RuvB allows RuvC to scan DNA until it finds its consensus sequence, where it cleaves and resolves the cruciform DNA. In Prochlorococcus marinus (strain AS9601), this protein is Crossover junction endodeoxyribonuclease RuvC.